The chain runs to 114 residues: PDZK1-interacting protein 1 (114 aa).

Residues 1–28 lie on the Extracellular side of the membrane; it reads MSAFGLLILGLLTAVPPASCRQGLGNLQ. A helical transmembrane segment spans residues 29-51; the sequence is PWMQGLIAVAVFLVLVAIAFAVN. Over 52-114 the chain is Cytoplasmic; it reads HFWCQEEPEP…EEGKVRSTPM (63 aa). Serine 85 carries the post-translational modification Phosphoserine. The tract at residues 95-114 is disordered; sequence HENAYENVPEEEGKVRSTPM. Residues 105 to 114 show a composition bias toward basic and acidic residues; the sequence is EEGKVRSTPM.

The protein belongs to the PDZK1-interacting protein 1/SMIM24 family. In terms of assembly, forms a heterodimer (via N-terminal transmembrane helix) with SLC5A2/SGLT2 (via TM13); this interaction enhances SLC5A2 transporter activity. Interacts with PDZK1.

The protein resides in the apical cell membrane. In terms of biological role, auxiliary protein of electrogenic Na(+)-coupled sugar symporter SLC5A2/SGLT2 and SLC5A1/SGLT1. Essential for the transporter activity of SLC5A2/SGLT2 but not SLC5A1/SGLT1. This Pongo abelii (Sumatran orangutan) protein is PDZK1-interacting protein 1.